A 707-amino-acid chain; its full sequence is Serine/threonine protein kinase UL97 (707 aa).

A compositionally biased stretch (low complexity) spans 1 to 14 (MSSALRSRARSASL). Disordered stretches follow at residues 1–32 (MSSA…PSRA), 115–146 (EKED…GDGY), 176–199 (FTGG…PLRP), and 231–264 (ESQD…EADS). Basic and acidic residues predominate over residues 115-127 (EKEDAASDKENLR). Residues 178–188 (GGSDPSDSVSG) are compositionally biased toward low complexity. ATP is bound by residues 337-345 (LGQGSFGEV) and Lys359. The active-site Proton acceptor is the Asp456.

This sequence belongs to the protein kinase superfamily. Tyr protein kinase family. HCMV ganciclovir subfamily. As to quaternary structure, interacts with UL83. In terms of processing, autophosphorylates on serine and threonine residues.

It localises to the virion. It carries out the reaction L-seryl-[protein] + ATP = O-phospho-L-seryl-[protein] + ADP + H(+). The catalysed reaction is L-threonyl-[protein] + ATP = O-phospho-L-threonyl-[protein] + ADP + H(+). In terms of biological role, serine/threonine protein kinase that plays important roles in several processes including nuclear viral egress, viral replication or regulation of host cell cycle progression. Participates in the acquisition of tegument during virion morphogenesis in the nucleus. Redistributes the host nuclear lamina by phosphorylating cellular Lamins-A/C. Plays a role in viral DNA synthesis by phosphorylating the DNA polymerase processivity factor UL44. Stimulates host cell cycle to support viral DNA synthesis by phosphorylating host retinoblastoma/RB1 protein. Additional substrates have been identified including host EF1D or H2B. Also phosphorylates host SAMHD1 and thereby counteracts its antiviral effect by reducing its dNTP hydrolase activity. This Human cytomegalovirus (strain Towne) (HHV-5) protein is Serine/threonine protein kinase UL97 (UL97).